Here is a 337-residue protein sequence, read N- to C-terminus: 4-hydroxythreonine-4-phosphate dehydrogenase (337 aa).

The substrate site is built by His139 and Thr140. Residues His173, His218, and His273 each coordinate a divalent metal cation. Lys281, Asn290, and Arg299 together coordinate substrate.

The protein belongs to the PdxA family. As to quaternary structure, homodimer. Requires Zn(2+) as cofactor. Mg(2+) serves as cofactor. It depends on Co(2+) as a cofactor.

It localises to the cytoplasm. It catalyses the reaction 4-(phosphooxy)-L-threonine + NAD(+) = 3-amino-2-oxopropyl phosphate + CO2 + NADH. It participates in cofactor biosynthesis; pyridoxine 5'-phosphate biosynthesis; pyridoxine 5'-phosphate from D-erythrose 4-phosphate: step 4/5. Its function is as follows. Catalyzes the NAD(P)-dependent oxidation of 4-(phosphooxy)-L-threonine (HTP) into 2-amino-3-oxo-4-(phosphooxy)butyric acid which spontaneously decarboxylates to form 3-amino-2-oxopropyl phosphate (AHAP). The sequence is that of 4-hydroxythreonine-4-phosphate dehydrogenase from Rhodopseudomonas palustris (strain ATCC BAA-98 / CGA009).